The following is a 221-amino-acid chain: NIP3 homolog (221 aa).

The tract at residues 24 to 55 (GEKTDESVQPQQQTEQSSAQQTTPSAKAVSNP) is disordered. Residue K26 forms a Glycyl lysine isopeptide (Lys-Gly) (interchain with G-Cter in ubiquitin) linkage. Low complexity predominate over residues 32–49 (QPQQQTEQSSAQQTTPSA). A helical membrane pass occupies residues 189 to 209 (VVFGFLVTNIFSFVVGAAVGF). Residues 189-209 (VVFGFLVTNIFSFVVGAAVGF) are required for initiation of apoptosis.

Belongs to the NIP3 family. In terms of assembly, homodimer; via transmembrane domain. Interacts with ced-3 and ced-9. In terms of processing, ubiquitinated and degraded by the proteasome. Under oxidative stress conditions, ubiquitinated at Lys-26 in a pink-1 dependent manner. Colocalizes with pdr-1 and may be ubiquitinated by it. As to expression, expressed in all somatic tissues including neurons, pharynx, intestine, body wall muscles and vulva muscles.

It localises to the mitochondrion outer membrane. In terms of biological role, initiates apoptosis in a BH3-independent mechanism possibly by recruiting ced-3 to mitochondria and other cytoplasmic membranes. Has a role in lifespan and tumor growth. Required for the induction of mitophagy under stress conditions. The sequence is that of NIP3 homolog from Caenorhabditis elegans.